Reading from the N-terminus, the 217-residue chain is Cytochrome c biogenesis ATP-binding export protein CcmA (217 aa).

One can recognise an ABC transporter domain in the interval 6–215 (FSAKNLACVR…HLDQFAVAEE (210 aa)). 38 to 45 (GPNGSGKS) is an ATP binding site.

The protein belongs to the ABC transporter superfamily. CcmA exporter (TC 3.A.1.107) family. The complex is composed of two ATP-binding proteins (CcmA) and two transmembrane proteins (CcmB).

It localises to the cell inner membrane. The catalysed reaction is heme b(in) + ATP + H2O = heme b(out) + ADP + phosphate + H(+). In terms of biological role, part of the ABC transporter complex CcmAB involved in the biogenesis of c-type cytochromes; once thought to export heme, this seems not to be the case, but its exact role is uncertain. Responsible for energy coupling to the transport system. In Paramagnetospirillum magneticum (strain ATCC 700264 / AMB-1) (Magnetospirillum magneticum), this protein is Cytochrome c biogenesis ATP-binding export protein CcmA.